Consider the following 407-residue polypeptide: Tyrosine--tRNA ligase (407 aa).

Position 35 (Tyr35) interacts with L-tyrosine. Residues 40–49 (PTADSLHVGH) carry the 'HIGH' region motif. Tyr168 and Gln172 together coordinate L-tyrosine. Positions 228–232 (KMGKT) match the 'KMSKS' region motif. Position 231 (Lys231) interacts with ATP. The region spanning 341–405 (NLLVDLLVKC…RGKKNFNRIV (65 aa)) is the S4 RNA-binding domain.

It belongs to the class-I aminoacyl-tRNA synthetase family. TyrS type 1 subfamily. As to quaternary structure, homodimer.

Its subcellular location is the cytoplasm. It carries out the reaction tRNA(Tyr) + L-tyrosine + ATP = L-tyrosyl-tRNA(Tyr) + AMP + diphosphate + H(+). Catalyzes the attachment of tyrosine to tRNA(Tyr) in a two-step reaction: tyrosine is first activated by ATP to form Tyr-AMP and then transferred to the acceptor end of tRNA(Tyr). The protein is Tyrosine--tRNA ligase of Clostridium botulinum (strain Kyoto / Type A2).